The following is a 196-amino-acid chain: Probable GTP-binding protein EngB (196 aa).

Positions N22–K195 constitute an EngB-type G domain. Residues G30–S37, G57–T61, D75–G78, T142–D145, and F174–A176 each bind GTP. The Mg(2+) site is built by S37 and T59.

This sequence belongs to the TRAFAC class TrmE-Era-EngA-EngB-Septin-like GTPase superfamily. EngB GTPase family. It depends on Mg(2+) as a cofactor.

Its function is as follows. Necessary for normal cell division and for the maintenance of normal septation. The protein is Probable GTP-binding protein EngB of Limosilactobacillus reuteri (strain DSM 20016) (Lactobacillus reuteri).